The sequence spans 365 residues: tRNA/tmRNA (uracil-C(5))-methyltransferase (365 aa).

S-adenosyl-L-methionine-binding residues include Q189, Y217, N222, E238, and D298. C323 acts as the Nucleophile in catalysis. Residue E357 is the Proton acceptor of the active site.

Belongs to the class I-like SAM-binding methyltransferase superfamily. RNA M5U methyltransferase family. TrmA subfamily.

It catalyses the reaction uridine(54) in tRNA + S-adenosyl-L-methionine = 5-methyluridine(54) in tRNA + S-adenosyl-L-homocysteine + H(+). It carries out the reaction uridine(341) in tmRNA + S-adenosyl-L-methionine = 5-methyluridine(341) in tmRNA + S-adenosyl-L-homocysteine + H(+). Functionally, dual-specificity methyltransferase that catalyzes the formation of 5-methyluridine at position 54 (m5U54) in all tRNAs, and that of position 341 (m5U341) in tmRNA (transfer-mRNA). The chain is tRNA/tmRNA (uracil-C(5))-methyltransferase from Shewanella baltica (strain OS185).